The primary structure comprises 105 residues: Heat shock protein HspQ (105 aa).

It belongs to the HspQ family.

It is found in the cytoplasm. Functionally, involved in the degradation of certain denaturated proteins, including DnaA, during heat shock stress. The chain is Heat shock protein HspQ from Klebsiella pneumoniae (strain 342).